The primary structure comprises 386 residues: Phosphatidyl-myo-inositol mannosyltransferase (386 aa).

Residues Tyr-9 and Gly-16 each contribute to the GDP-alpha-D-mannose site. A 1,2-diacyl-sn-glycero-3-phospho-(1D-myo-inositol) contacts are provided by residues Gln-18, 62–63 (YN), and Arg-68. Residues Arg-196, 201–202 (RK), 251–253 (VDD), Lys-256, 274–278 (ESFGI), and Glu-282 contribute to the GDP-alpha-D-mannose site.

This sequence belongs to the glycosyltransferase group 1 family. Glycosyltransferase 4 subfamily. In terms of assembly, monomer. Requires Mg(2+) as cofactor.

It is found in the cell membrane. It carries out the reaction a 1,2-diacyl-sn-glycero-3-phospho-(1D-myo-inositol) + GDP-alpha-D-mannose = a 1,2-diacyl-sn-glycero-3-phospho-[alpha-D-mannopyranosyl-(1&lt;-&gt;6)-D-myo-inositol] + GDP + H(+). It participates in phospholipid metabolism; phosphatidylinositol metabolism. Functionally, involved in the biosynthesis of phosphatidyl-myo-inositol mannosides (PIM) which are early precursors in the biosynthesis of lipomannans (LM) and lipoarabinomannans (LAM). Catalyzes the addition of a mannosyl residue from GDP-D-mannose (GDP-Man) to the position 2 of the carrier lipid phosphatidyl-myo-inositol (PI) to generate a phosphatidyl-myo-inositol bearing an alpha-1,2-linked mannose residue (PIM1). In contrary to PimB, the mannosyltransferase PimA is unable to transfer a mannose residue to the position 6 of the phosphatidyl-myo-inositol of PIM1. The protein is Phosphatidyl-myo-inositol mannosyltransferase of Mycolicibacterium smegmatis (strain ATCC 700084 / mc(2)155) (Mycobacterium smegmatis).